The following is a 207-amino-acid chain: Large ribosomal subunit protein uL4 (207 aa).

Positions 47–78 are disordered; the sequence is GTASSKTRAEVRGGGKKPWRQKGTGRARVGSS. The span at 60–71 shows a compositional bias: basic residues; the sequence is GGKKPWRQKGTG.

Belongs to the universal ribosomal protein uL4 family. In terms of assembly, part of the 50S ribosomal subunit.

Functionally, one of the primary rRNA binding proteins, this protein initially binds near the 5'-end of the 23S rRNA. It is important during the early stages of 50S assembly. It makes multiple contacts with different domains of the 23S rRNA in the assembled 50S subunit and ribosome. Its function is as follows. Forms part of the polypeptide exit tunnel. This chain is Large ribosomal subunit protein uL4, found in Syntrophomonas wolfei subsp. wolfei (strain DSM 2245B / Goettingen).